The chain runs to 651 residues: Maternal embryonic leucine zipper kinase (651 aa).

The region spanning 11 to 263 is the Protein kinase domain; the sequence is YELHETIGTG…MKNLLNHPWI (253 aa). ATP-binding positions include 17–25 and K40; that span reads IGTGGFAKV. Position 56 is a phosphothreonine; by autocatalysis (T56). D132 (proton acceptor) is an active-site residue. Residue Y163 is modified to Phosphotyrosine; by autocatalysis. T167 carries the post-translational modification Phosphothreonine; by autocatalysis. S171 and S253 each carry phosphoserine; by autocatalysis. Residues 282-321 are UBA-like; the sequence is LDDDCVTELSVHHRNNRQTMEDLISLWQYDHLTATYLLLL. The interval 326–651 is autoinhibitory region; that stretch reads RGKPVRLRLS…VEDILSSCKV (326 aa). S336, S343, and S356 each carry phosphoserine; by autocatalysis. Position 367 is a phosphotyrosine (Y367). A Phosphoserine; by autocatalysis modification is found at S391. T398 bears the Phosphothreonine; by autocatalysis mark. The residue at position 407 (S407) is a Phosphoserine; by autocatalysis. T409 carries the phosphothreonine modification. At S431 the chain carries Phosphoserine; by autocatalysis. The residue at position 478 (T478) is a Phosphothreonine. T494 carries the phosphothreonine; by autocatalysis modification. Residue S498 is modified to Phosphoserine. S505 is subject to Phosphoserine; by autocatalysis. Phosphothreonine is present on T518. S529 bears the Phosphoserine; by autocatalysis mark. S529 bears the Phosphoserine mark. T539 carries the post-translational modification Phosphothreonine; by autocatalysis. One can recognise a KA1 domain in the interval 602–651; it reads SDFGKVTMQFELEVCQLQKPDVVGIRRQRLKGDAWVYKRLVEDILSSCKV.

It belongs to the protein kinase superfamily. CAMK Ser/Thr protein kinase family. SNF1 subfamily. Monomer. Interacts with ZNF622 and PPP1R8. Post-translationally, autophosphorylated: autophosphorylation of the T-loop at Thr-167 and Ser-171 is required for activation. Thr-478 phosphorylation during mitosis promotes interaction with PPP1R8. As to expression, expressed in placenta, kidney, thymus, testis, ovary and intestine.

Its subcellular location is the cell membrane. The catalysed reaction is L-tyrosyl-[protein] + ATP = O-phospho-L-tyrosyl-[protein] + ADP + H(+). It catalyses the reaction L-seryl-[protein] + ATP = O-phospho-L-seryl-[protein] + ADP + H(+). The enzyme catalyses L-threonyl-[protein] + ATP = O-phospho-L-threonyl-[protein] + ADP + H(+). With respect to regulation, activated by autophosphorylation of the T-loop at Thr-167 and Ser-171: in contrast to other members of the SNF1 subfamily, phosphorylation at Thr-167 is not mediated by STK11/LKB1 but via autophosphorylation instead. Inhibited by calcium-binding. Kinase activity is also regulated by reducing agents: dithiothreitol (DTT) or reduced glutathione are required for kinase activity in vitro; such dependence is however not due to the presence of disulfide bonds. Its function is as follows. Serine/threonine-protein kinase involved in various processes such as cell cycle regulation, self-renewal of stem cells, apoptosis and splicing regulation. Has a broad substrate specificity; phosphorylates BCL2L14, CDC25B, MAP3K5/ASK1 and ZNF622. Acts as an activator of apoptosis by phosphorylating and activating MAP3K5/ASK1. Acts as a regulator of cell cycle, notably by mediating phosphorylation of CDC25B, promoting localization of CDC25B to the centrosome and the spindle poles during mitosis. Plays a key role in cell proliferation and carcinogenesis. Required for proliferation of embryonic and postnatal multipotent neural progenitors. Phosphorylates and inhibits BCL2L14, possibly leading to affect mammary carcinogenesis by mediating inhibition of the pro-apoptotic function of BCL2L14. Also involved in the inhibition of spliceosome assembly during mitosis by phosphorylating ZNF622, thereby contributing to its redirection to the nucleus. May also play a role in primitive hematopoiesis. The polypeptide is Maternal embryonic leucine zipper kinase (MELK) (Homo sapiens (Human)).